A 253-amino-acid polypeptide reads, in one-letter code: Endonuclease NucS (253 aa).

This sequence belongs to the NucS endonuclease family.

The protein localises to the cytoplasm. Cleaves both 3' and 5' ssDNA extremities of branched DNA structures. This Pyrococcus horikoshii (strain ATCC 700860 / DSM 12428 / JCM 9974 / NBRC 100139 / OT-3) protein is Endonuclease NucS.